A 657-amino-acid chain; its full sequence is Regulator of MON1-CCZ1 complex (657 aa).

The Mic1 domain maps to 471–637 (KKEMPHKFVI…NFTPGEHCEE (167 aa)).

The protein belongs to the RMC1 family. In terms of assembly, found in a complex with RMC1, CCZ1 MON1A and MON1B.

The protein resides in the lysosome membrane. It localises to the late endosome membrane. Functionally, component of the CCZ1-MON1 RAB7A guanine exchange factor (GEF). Acts as a positive regulator of CCZ1-MON1A/B function necessary for endosomal/autophagic flux and efficient RAB7A localization. The protein is Regulator of MON1-CCZ1 complex of Homo sapiens (Human).